The chain runs to 139 residues: D-ribose pyranase (139 aa).

Histidine 20 serves as the catalytic Proton donor. Residues aspartate 28, histidine 106, and 128–130 (YAN) contribute to the substrate site.

This sequence belongs to the RbsD / FucU family. RbsD subfamily. Homodecamer.

It is found in the cytoplasm. The enzyme catalyses beta-D-ribopyranose = beta-D-ribofuranose. It functions in the pathway carbohydrate metabolism; D-ribose degradation; D-ribose 5-phosphate from beta-D-ribopyranose: step 1/2. Functionally, catalyzes the interconversion of beta-pyran and beta-furan forms of D-ribose. The protein is D-ribose pyranase of Photorhabdus laumondii subsp. laumondii (strain DSM 15139 / CIP 105565 / TT01) (Photorhabdus luminescens subsp. laumondii).